A 419-amino-acid chain; its full sequence is Phosphatidylcholine:ceramide cholinephosphotransferase 1 (419 aa).

In terms of domain architecture, SAM spans 13-76; it reads WSPKKVADWL…LDMIETLKME (64 aa). A Phosphoserine modification is found at serine 14. 5 helical membrane-spanning segments follow: residues 142-162, 190-210, 221-241, 282-302, and 310-330; these read LLAFLYALSCFVLTTVMISVV, FSICEINGMILVGLWLFQWLL, FFCIVGTLYLYRCITMYVTTL, MCGDYLYSGHTVMLTLTYLFI, and LWWYHWICWLLSVVGIFCILL. Residue histidine 291 is part of the active site. Residues 331–419 are Cytoplasmic-facing; sequence AHDHYTVDVV…VKYSRLVNDT (89 aa). Active-site residues include histidine 334 and aspartate 338.

This sequence belongs to the sphingomyelin synthase family.

It localises to the golgi apparatus membrane. The enzyme catalyses an N-acylsphing-4-enine + a 1,2-diacyl-sn-glycero-3-phosphocholine = a sphingomyelin + a 1,2-diacyl-sn-glycerol. It carries out the reaction 1-(9Z-octadecenoyl)-2-acyl-sn-3-glycerol + a sphingomyelin = a 1-(9Z-octadecenoyl)-2-acyl-sn-glycero-3-phosphocholine + an N-acylsphing-4-enine. It catalyses the reaction N-hexadecanoylsphinganine + a 1,2-diacyl-sn-glycero-3-phosphocholine = N-hexadecanoyl-sphinganine-1-phosphocholine + a 1,2-diacyl-sn-glycerol. The catalysed reaction is N-hexadecanoyl-(4R)-hydroxysphinganine + a 1,2-diacyl-sn-glycero-3-phosphocholine = N-hexadecanoyl-(4R)-hydroxysphinganine-phosphocholine + a 1,2-diacyl-sn-glycerol. The enzyme catalyses an N-acylsphing-4-enine + a 1,2-diacyl-sn-glycero-3-phosphoethanolamine = an N-acylsphing-4-enine 1-phosphoethanolamine + a 1,2-diacyl-sn-glycerol. It participates in sphingolipid metabolism. In terms of biological role, major sphingomyelin synthase at the Golgi apparatus. Catalyzes the reversible transfer of phosphocholine moiety in sphingomyelin biosynthesis: in the forward reaction transfers phosphocholine head group of phosphatidylcholine (PC) on to ceramide (CER) to form ceramide phosphocholine (sphingomyelin, SM) and diacylglycerol (DAG) as by-product, and in the reverse reaction transfers phosphocholine from SM to DAG to form PC and CER. The direction of the reaction depends on the levels of CER and DAG in Golgi membranes. Converts the newly synthesized CER, that is transported from the endoplasmic reticulum to the trans-Golgi by the Cer transport protein (CERT), to SM. Can form a heteromeric complex with glucosylceramide synthase (GCS) increasing SMS activity and reducing glucosylceramide synthesis, a critical mechanism that controls the metabolic fate of CER in the Golgi. Does not use free phosphorylcholine or CDP-choline as donor. Can also transfer phosphoethanolamine head group of phosphatidylethanolamine (PE) on to CER to form ceramide phosphoethanolamine (CPE). Regulates receptor-mediated signal transduction via mitogenic DAG and proapoptotic CER, as well as via SM, a structural component of membrane rafts that serve as platforms for signal transduction and protein sorting. Plays a role in secretory transport via regulation of DAG pool at the Golgi apparatus and its downstream effects on PRKD1. The chain is Phosphatidylcholine:ceramide cholinephosphotransferase 1 (Sgms1) from Rattus norvegicus (Rat).